The chain runs to 439 residues: Glutamine synthetase (439 aa).

A GS beta-grasp domain is found at 12-93; sequence SKIKFVQLVF…VYGFIYKDNK (82 aa). The region spanning 99 to 439 is the GS catalytic domain; sequence PRGILKRALE…EWELERYFFL (341 aa). Glu122 and Glu124 together coordinate Mg(2+). Position 172 (Glu172) interacts with ATP. Residues Glu177 and Glu184 each coordinate Mg(2+). Gly229 contributes to the L-glutamate binding site. A Mg(2+)-binding site is contributed by His233. ATP contacts are provided by residues 235-237 and Ser237; that span reads HIS. The L-glutamate site is built by Arg283, Glu289, and Arg301. Residues Arg301, Arg306, and Lys313 each contribute to the ATP site. Glu318 lines the Mg(2+) pocket. Arg320 lines the L-glutamate pocket.

It belongs to the glutamine synthetase family. Oligomer of 12 subunits arranged in the form of two hexagons. Requires Mg(2+) as cofactor.

The protein localises to the cytoplasm. It catalyses the reaction L-glutamate + NH4(+) + ATP = L-glutamine + ADP + phosphate + H(+). Functionally, probably involved in nitrogen metabolism via ammonium assimilation. Catalyzes the ATP-dependent biosynthesis of glutamine from glutamate and ammonia. The sequence is that of Glutamine synthetase from Pyrococcus woesei.